Here is a 107-residue protein sequence, read N- to C-terminus: Cysteine proteinase inhibitor (107 aa).

Residues 18–107 enclose the Cystatin domain; sequence GGVQDAPAGR…KQLQEFKPAA (90 aa). The short motif at 63–67 is the Secondary area of contact element; it reads QVVAG.

It belongs to the cystatin family. Phytocystatin subfamily. Expressed in embryos, developing endosperms, leaves, roots, flowers and pollen grains.

In terms of biological role, inhibits papain, ficin, cathepsin B and, to a lesser extent, chymopapain, but is inactive against bromelain. Inhibits the growth of pathogenic fungi. Regulated by the DOF transcription factors SAD (activator) and BPBF (repressor). The protein is Cysteine proteinase inhibitor (ICY) of Hordeum vulgare (Barley).